Consider the following 298-residue polypeptide: ATP synthase gamma chain (298 aa).

It belongs to the ATPase gamma chain family. F-type ATPases have 2 components, CF(1) - the catalytic core - and CF(0) - the membrane proton channel. CF(1) has five subunits: alpha(3), beta(3), gamma(1), delta(1), epsilon(1). CF(0) has three main subunits: a, b and c.

It is found in the cell inner membrane. In terms of biological role, produces ATP from ADP in the presence of a proton gradient across the membrane. The gamma chain is believed to be important in regulating ATPase activity and the flow of protons through the CF(0) complex. The polypeptide is ATP synthase gamma chain (Zymomonas mobilis subsp. mobilis (strain ATCC 31821 / ZM4 / CP4)).